A 127-amino-acid chain; its full sequence is Small ribosomal subunit protein uS13 (127 aa).

The segment at 95–127 (GLPLRGQRTKTNARTRRGKKGAAIGGKKKATKK) is disordered.

Belongs to the universal ribosomal protein uS13 family. Part of the 30S ribosomal subunit. Forms a loose heterodimer with protein S19. Forms two bridges to the 50S subunit in the 70S ribosome.

In terms of biological role, located at the top of the head of the 30S subunit, it contacts several helices of the 16S rRNA. In the 70S ribosome it contacts the 23S rRNA (bridge B1a) and protein L5 of the 50S subunit (bridge B1b), connecting the 2 subunits; these bridges are implicated in subunit movement. Contacts the tRNAs in the A and P-sites. This Herpetosiphon aurantiacus (strain ATCC 23779 / DSM 785 / 114-95) protein is Small ribosomal subunit protein uS13.